Consider the following 764-residue polypeptide: Palmitoyltransferase AKR1 (764 aa).

2 disordered regions span residues 1-38 (MVNE…GDSN) and 51-71 (SGNE…AEED). Residues 1 to 321 (MVNELENVPR…IKKWFKKSQH (321 aa)) are Cytoplasmic-facing. Polar residues predominate over residues 10–27 (RASTLTNEEQTVDPSNND). Phosphoserine is present on residues serine 51 and serine 57. ANK repeat units lie at residues 72-102 (PLLT…EVNN), 108-137 (EHIT…DVNA), 142-171 (LHAT…DPTM), 175-204 (QGFN…SKGL), 213-242 (KGRT…SIKI), and 246-275 (EGFT…DFFQ). A helical transmembrane segment spans residues 322 to 341 (AKLVTFITPFLFLGIAFALF). At 342 to 346 (SHINP) the chain is on the lumenal side. The chain crosses the membrane as a helical span at residues 347 to 364 (LFVIIVLFLLAIATNKGL). Residues 365 to 384 (NKFVLPSYGRMGVHNVTLLR) lie on the Cytoplasmic side of the membrane. Residues 385-405 (SPLLSGVFFGTLLWVTIVWFF) traverse the membrane as a helical segment. The Lumenal portion of the chain corresponds to 406 to 418 (KVMPRTFSDEQYT). A helical membrane pass occupies residues 419-439 (NILMLVILVSVFYLFGQLVIM). The Cytoplasmic segment spans residues 440-513 (DPGCLPEETD…FNDVGLKNHK (74 aa)). One can recognise a DHHC domain in the interval 470 to 520 (NFCIETWIRKPLRSKFSPLNNAVVARFDHYCPWIFNDVGLKNHKAFIFFIT). The active-site S-palmitoyl cysteine intermediate is cysteine 500. The chain crosses the membrane as a helical span at residues 514 to 534 (AFIFFITLMESGIFTFLALCL). Topologically, residues 535 to 570 (EYFDELEDAHEDTSQKNGKCFILGASDLCSGLIYDR) are lumenal. The chain crosses the membrane as a helical span at residues 571–591 (FVFLILLWALLQSIWVASLIF). The Cytoplasmic segment spans residues 592-764 (VQAFQICKGM…KDVEQGNDMV (173 aa)).

It belongs to the DHHC palmitoyltransferase family. AKR/ZDHHC17 subfamily.

The protein resides in the early endosome membrane. Its subcellular location is the golgi apparatus membrane. It carries out the reaction L-cysteinyl-[protein] + hexadecanoyl-CoA = S-hexadecanoyl-L-cysteinyl-[protein] + CoA. In terms of biological role, palmitoyltransferase specific for casein kinase 1. Palmitoylates isoforms YCK1 and YCK2 at both C-terminal cysteine residues, which is required for their proper plasma membrane localization. Required for constitutive endocytosis of a-factor receptor STE3 and both constitutive and pheromone-induced endocytosis of alpha-factor receptor STE2. The polypeptide is Palmitoyltransferase AKR1 (AKR1) (Saccharomyces cerevisiae (strain ATCC 204508 / S288c) (Baker's yeast)).